Consider the following 151-residue polypeptide: Flagellar assembly factor FliW 2 (151 aa).

The protein belongs to the FliW family. As to quaternary structure, interacts with translational regulator CsrA and flagellin(s).

It is found in the cytoplasm. Acts as an anti-CsrA protein, binds CsrA and prevents it from repressing translation of its target genes, one of which is flagellin. Binds to flagellin and participates in the assembly of the flagellum. This Desulfotalea psychrophila (strain LSv54 / DSM 12343) protein is Flagellar assembly factor FliW 2.